Reading from the N-terminus, the 450-residue chain is Divalent metal cation transporter MntH (450 aa).

Helical transmembrane passes span 34–54 (LSFL…GNWI), 61–81 (AQYG…AMLL), 108–128 (IAII…IAEV), 141–161 (IPLI…LFIM), 170–190 (AIVG…VYIS), 212–232 (GILY…NLYL), 263–283 (IQLS…ASLF), 305–325 (PVLG…ALLA), 361–381 (SLAV…AAKI), 383–403 (QLLV…LIPL), and 422–442 (VNII…YLIV).

The protein belongs to the NRAMP family.

It localises to the cell membrane. H(+)-stimulated, divalent metal cation uptake system. This is Divalent metal cation transporter MntH from Staphylococcus aureus (strain JH1).